Here is a 479-residue protein sequence, read N- to C-terminus: MFFSKVMLTRRILVRGLATAKSSAPKLTDVLIVGGGPAGLTLAASIKNSPQLKDLKTTLVDMVDLKDKLSDFYNSPPDYFTNRIVSVTPRSIHFLENNAGATLMHDRIQSYDGLYVTDGCSKATLDLARDSMLCMIEIINIQASLYNRISQYDSKKDSIDIIDNTKVVNIKHSDPNDPLSWPLVTLSNGEVYKTRLLVGADGFNSPTRRFSQIPSRGWMYNAYGVVASMKLEYPPFKLRGWQRFLPTGPIAHLPMPENNATLVWSSSERLSRLLLSLPPESFTALINAAFVLEDADMNYYYRTLEDGSMDTDKLIEDIKFRTEEIYATLKDESDIDEIYPPRVVSIIDKTRARFPLKLTHADRYCTDRVALVGDAAHTTHPLAGQGLNMGQTDVHGLVYALEKAMERGLDIGSSLSLEPFWAERYPSNNVLLGMADKLFKLYHTNFPPVVALRTFGLNLTNKIGPVKNMIIDTLGGNEK.

The N-terminal 17 residues, 1-17 (MFFSKVMLTRRILVRGL), are a transit peptide targeting the mitochondrion.

It belongs to the UbiH/COQ6 family. Component of a multi-subunit COQ enzyme complex, composed of at least COQ3, COQ4, COQ5, COQ6, COQ7 and COQ9. Requires FAD as cofactor.

Its subcellular location is the mitochondrion inner membrane. The catalysed reaction is 4-hydroxy-3-(all-trans-hexaprenyl)benzoate + 2 reduced [2Fe-2S]-[ferredoxin] + O2 + 2 H(+) = 3,4-dihydroxy-5-(all-trans-hexaprenyl)benzoate + 2 oxidized [2Fe-2S]-[ferredoxin] + H2O. It carries out the reaction 2-methoxy-6-(all-trans-hexaprenyl)phenol + 2 reduced [2Fe-2S]-[ferredoxin] + O2 + 2 H(+) = 2-methoxy-6-(all-trans-hexaprenyl)benzene-1,4-diol + 2 oxidized [2Fe-2S]-[ferredoxin] + H2O. The enzyme catalyses 4-amino-3-(all-trans-hexaprenyl)benzoate + 2 reduced [2Fe-2S]-[ferredoxin] + O2 + 2 H(+) = 4-amino-5-hydroxy-3-(all-trans-hexaprenyl)benzoate + 2 oxidized [2Fe-2S]-[ferredoxin] + H2O. It catalyses the reaction 4-amino-5-hydroxy-3-(all-trans-hexaprenyl)benzoate + 4 reduced [2Fe-2S]-[ferredoxin] + O2 + 5 H(+) = 3,4-dihydroxy-5-(all-trans-hexaprenyl)benzoate + 4 oxidized [2Fe-2S]-[ferredoxin] + NH4(+) + H2O. Its pathway is cofactor biosynthesis; ubiquinone biosynthesis. In terms of biological role, FAD-dependent monooxygenase required for two non-consecutive steps during ubiquinone biosynthesis. Required for the C5-ring hydroxylation during ubiquinone biosynthesis by catalyzing the hydroxylation of 4-hydroxy-3-(all-trans-hexaprenyl)benzoic acid to 3,4-dihydroxy-5-(all-trans-hexaprenyl)benzoic acid. Also acts downstream of COQ4, for the C1-hydroxylation during ubiquinone biosynthesis by catalyzing the hydroxylation of 2-methoxy-6-(all-trans-hexaprenyl)phenol to 2-methoxy-6-(all-trans-hexaprenyl)benzene-1,4-diol. The electrons required for the hydroxylation reaction are funneled indirectly from NADPH via ferredoxin (YAH1) and ferredoxin reductase (ARH1) to COQ6. Can also convert 3-hexaprenyl-4-aminobenzoic acid (HAB), a COQ2-prenylated pABA, to DHHB in a two step process. HAB is first hydroxylated at C5 to yield 3-hexaprenyl-4-amino-5-hydroxybenzoic acid (HHAB) which is further deaminated at C4 by COQ6 to produce DHHB. This Saccharomyces cerevisiae (strain ATCC 204508 / S288c) (Baker's yeast) protein is Ubiquinone biosynthesis monooxygenase COQ6, mitochondrial.